Reading from the N-terminus, the 320-residue chain is MDATACNESVDGSPVFYLLGIPSLPETFFLPVFFIFLLFYLLILMGNALILVAVVAEPSLHKPMYFFLINLSTLDILFTTTTVPKMLSLFLLGDRFLSFSSCLLQMYLFQSFTCSEAFILVVMAYDRYVAICHPLHYPVLMNPQTNATLAASAWLTALLLPIPAVVRTSQMAYNSIAYIYHCFCDHLAVVQASCSDTTPQTLMGFCIAMVVSFLPLLLVLLSYVHILASVLRISSLEGRAKAFSTCSSHLLVVGTYYSSIAIAYVAYRADLPLDFHIMGNVVYAILTPILNPLIYTLRNRDVKAAITKIMSQDPGCDRSI.

At 1–31 (MDATACNESVDGSPVFYLLGIPSLPETFFLP) the chain is on the extracellular side. Asn7 carries an N-linked (GlcNAc...) asparagine glycan. The helical transmembrane segment at 32–52 (VFFIFLLFYLLILMGNALILV) threads the bilayer. The Cytoplasmic portion of the chain corresponds to 53–62 (AVVAEPSLHK). A helical membrane pass occupies residues 63-83 (PMYFFLINLSTLDILFTTTTV). Topologically, residues 84–102 (PKMLSLFLLGDRFLSFSSC) are extracellular. A disulfide bridge connects residues Cys102 and Cys184. A helical membrane pass occupies residues 103 to 123 (LLQMYLFQSFTCSEAFILVVM). Topologically, residues 124–145 (AYDRYVAICHPLHYPVLMNPQT) are cytoplasmic. The chain crosses the membrane as a helical span at residues 146-166 (NATLAASAWLTALLLPIPAVV). The Extracellular segment spans residues 167–200 (RTSQMAYNSIAYIYHCFCDHLAVVQASCSDTTPQ). The helical transmembrane segment at 201–221 (TLMGFCIAMVVSFLPLLLVLL) threads the bilayer. Topologically, residues 222-245 (SYVHILASVLRISSLEGRAKAFST) are cytoplasmic. A helical membrane pass occupies residues 246-266 (CSSHLLVVGTYYSSIAIAYVA). The Extracellular portion of the chain corresponds to 267–276 (YRADLPLDFH). A helical transmembrane segment spans residues 277–297 (IMGNVVYAILTPILNPLIYTL). The Cytoplasmic portion of the chain corresponds to 298-320 (RNRDVKAAITKIMSQDPGCDRSI).

This sequence belongs to the G-protein coupled receptor 1 family. Detected in the keratinocytes of the epidermis (at protein level). Detected in hair follicles in proximal outer root sheath and hair matrix keratinocytes (at protein level).

It localises to the cell membrane. Its function is as follows. Olfactory receptor. Activated by the synthetic sandalwood odorant sandalore. Endogenous ligand is unknown. The activity of this receptor is probably mediated by G proteins which induce elevation of intracellular Ca(2+), a cAMP-dependent pathway and phosphorylation of MAPK1/ERK2, MAPK3/ERK1 and p38 MAPKs. Activation of OR2AT4 induces proliferation, migration, and re-epithelialization during wound-healing processes of keratinocytes. Stimulation of OR2AT4 by sandalore promotes hair growth by decreasing apoptosis and increasing production of the anagen-prolonging growth factor IGF1 as well as other pathways involving various kinases. The protein is Olfactory receptor 2AT4 of Homo sapiens (Human).